A 264-amino-acid chain; its full sequence is Probable amino-acid-binding protein YxeM (264 aa).

A signal peptide spans Met-1–Ala-20. Cys-21 carries N-palmitoyl cysteine lipidation. Cys-21 is lipidated: S-diacylglycerol cysteine.

The protein belongs to the bacterial solute-binding protein 3 family. As to quaternary structure, the complex is composed of two ATP-binding proteins (YxeO), two transmembrane proteins (YxeN) and a solute-binding protein (YxeM).

It is found in the cell membrane. The protein resides in the membrane raft. Functionally, probably part of the ABC transporter complex YxeMNO that could be involved in amino-acid import. May transport S-methylcysteine. The sequence is that of Probable amino-acid-binding protein YxeM (yxeM) from Bacillus subtilis (strain 168).